The sequence spans 331 residues: Oxygen-evolving enhancer protein 1-2, chloroplastic (331 aa).

Residues 1–57 (MATSLQAAATFLQPAKIAASPSRNVHLRSNQTVGKSFGLDSSQARLTCSLHSDLKDF) constitute a chloroplast transit peptide. The N-terminal 27 residues, 58-84 (AGKCSDAAKIAGFALATSALVVSGAGA), are a transit peptide targeting the thylakoid.

Belongs to the PsbO family.

It is found in the plastid. Its subcellular location is the chloroplast thylakoid membrane. Stabilizes the manganese cluster which is the primary site of water splitting. Regulates dephosphorylation and turnover of the PSII reaction center D1 protein. The sequence is that of Oxygen-evolving enhancer protein 1-2, chloroplastic (PSBO2) from Arabidopsis thaliana (Mouse-ear cress).